The chain runs to 365 residues: Membrane-bound lytic murein transglycosylase A (365 aa).

The N-terminal stretch at 1–20 is a signal peptide; it reads MKGRWVKYLLMGTVVAMLAA. A lipid anchor (N-palmitoyl cysteine) is attached at cysteine 21. Cysteine 21 carries the S-diacylglycerol cysteine lipid modification.

Its subcellular location is the cell outer membrane. The enzyme catalyses Exolytic cleavage of the (1-&gt;4)-beta-glycosidic linkage between N-acetylmuramic acid (MurNAc) and N-acetylglucosamine (GlcNAc) residues in peptidoglycan, from either the reducing or the non-reducing ends of the peptidoglycan chains, with concomitant formation of a 1,6-anhydrobond in the MurNAc residue.. In terms of biological role, murein-degrading enzyme. May play a role in recycling of muropeptides during cell elongation and/or cell division. Degrades murein glycan strands and insoluble, high-molecular weight murein sacculi. In Escherichia coli O157:H7, this protein is Membrane-bound lytic murein transglycosylase A (mltA).